Here is a 287-residue protein sequence, read N- to C-terminus: PPP2R1A-PPP2R2A-interacting phosphatase regulator 1 (287 aa).

The interval 1–44 is disordered; the sequence is MAQEKMELDLELPPGTGGSPAEGGGSGGGGGLRRSNSAPLIHGL. Residues 15-32 show a composition bias toward gly residues; that stretch reads GTGGSPAEGGGSGGGGGL. Ser-35 is subject to Phosphoserine. A Phosphoserine; by CHEK1 modification is found at Ser-37. Residue Ser-45 is modified to Phosphoserine. Thr-47 is modified (phosphothreonine). Ser-48, Ser-62, and Ser-76 each carry phosphoserine. Residue Lys-89 forms a Glycyl lysine isopeptide (Lys-Gly) (interchain with G-Cter in SUMO1) linkage. A phosphoserine mark is found at Ser-143 and Ser-147. The residue at position 149 (Thr-149) is a Phosphothreonine. 2 disordered regions span residues 167–189 and 236–287; these read SNGL…RSQS and GVCV…LSSK. Composition is skewed to low complexity over residues 178–189 and 246–257; these read PTTRFTTRRSQS and GNSSSAGSSCNS. Phosphoserine occurs at positions 187 and 189. Polar residues predominate over residues 259–270; the sequence is AKVSTTTDSPVS. Residues Ser-267, Ser-270, and Ser-276 each carry the phosphoserine modification.

The protein belongs to the FAM122 family. As to quaternary structure, interacts with PPP2CA and PPP2R1A. Interacts (via its N-terminus) with PPP2R2A; the interaction is direct and this interaction inhibits PP2A activity. The CHEK1-mediated Ser-37 phosphorylated form interacts with 14-3-3 proteins. In terms of processing, CHEK1-mediated phosphorylation at Ser-37 negatively regulates its ability to inhibit serine/threonine-protein phosphatase 2A (PP2A) activity. Phosphorylation leads to its release from the PP2A complex and its sequestration by 14-3-3 proteins in the cytoplasm resulting in its inability to translocate to the nucleus, where it otherwise inhibits PP2A.

It localises to the nucleus. It is found in the cytoplasm. Functionally, acts as an inhibitor of serine/threonine-protein phosphatase 2A (PP2A) activity. Inhibits PP2A activity by blocking the substrate binding site on PPP2R2A and the active site of PPP2CA. Potentiates ubiquitin-mediated proteasomal degradation of serine/threonine-protein phosphatase 2A catalytic subunit alpha (PPP2CA). Inhibits PP2A-mediated dephosphorylation of WEE1, promoting ubiquitin-mediated proteolysis of WEE1, thereby releasing G2/M checkpoint. The sequence is that of PPP2R1A-PPP2R2A-interacting phosphatase regulator 1 from Homo sapiens (Human).